The following is a 156-amino-acid chain: Ribosomal RNA large subunit methyltransferase H (156 aa).

Residues L73, G104, and 123–128 (LSALTL) contribute to the S-adenosyl-L-methionine site.

Belongs to the RNA methyltransferase RlmH family. In terms of assembly, homodimer.

The protein resides in the cytoplasm. The catalysed reaction is pseudouridine(1915) in 23S rRNA + S-adenosyl-L-methionine = N(3)-methylpseudouridine(1915) in 23S rRNA + S-adenosyl-L-homocysteine + H(+). In terms of biological role, specifically methylates the pseudouridine at position 1915 (m3Psi1915) in 23S rRNA. The protein is Ribosomal RNA large subunit methyltransferase H of Shewanella denitrificans (strain OS217 / ATCC BAA-1090 / DSM 15013).